A 105-amino-acid polypeptide reads, in one-letter code: Large ribosomal subunit protein uL24 (105 aa).

It belongs to the universal ribosomal protein uL24 family. Part of the 50S ribosomal subunit.

One of two assembly initiator proteins, it binds directly to the 5'-end of the 23S rRNA, where it nucleates assembly of the 50S subunit. Its function is as follows. One of the proteins that surrounds the polypeptide exit tunnel on the outside of the subunit. The sequence is that of Large ribosomal subunit protein uL24 from Aliivibrio salmonicida (strain LFI1238) (Vibrio salmonicida (strain LFI1238)).